The primary structure comprises 568 residues: Glycine--tRNA ligase (568 aa).

Substrate contacts are provided by arginine 97 and glutamate 163. ATP contacts are provided by residues 195–197, 205–210, 322–323, and 441–444; these read RNE, IRLREF, EC, and GIDR. 210 to 214 is a binding site for substrate; that stretch reads FTQAE. 437–441 is a binding site for substrate; sequence EPSFG.

It belongs to the class-II aminoacyl-tRNA synthetase family.

The protein resides in the cytoplasm. It carries out the reaction tRNA(Gly) + glycine + ATP = glycyl-tRNA(Gly) + AMP + diphosphate. In terms of biological role, catalyzes the attachment of glycine to tRNA(Gly). The protein is Glycine--tRNA ligase of Pyrococcus furiosus (strain ATCC 43587 / DSM 3638 / JCM 8422 / Vc1).